The following is a 204-amino-acid chain: MKRVSLLGSAAIFALVFSACGGGGEHQHGEEMMAAVPAPDAEGAAGFDEFPIGEDRDVGPLHVGGVYFQPVEMHPAPGAQPSKEEADCHIEADIHANEAGKDLGYGVGDFVPYLRVVAFLQKHGSEKVQKVMFAPMNAGDGPHYGANVKFEEGLGTYKVRFEIAAPSHDEYSLHIDEQTGVSGRFWSEPLVAEWDDFEWKGPQW.

The first 19 residues, 1–19 (MKRVSLLGSAAIFALVFSA), serve as a signal peptide directing secretion. A lipid anchor (N-palmitoyl cysteine) is attached at Cys-20. The S-diacylglycerol cysteine moiety is linked to residue Cys-20.

It belongs to the UPF0423 family.

The protein resides in the cell membrane. This antigen is a pathogen-specific membrane immunogen. This is 34 kDa membrane antigen (tpd) from Treponema pallidum (strain Nichols).